A 199-amino-acid chain; its full sequence is Pectinesterase inhibitor 4 (199 aa).

Positions 1–25 (MLRFVVLSLTLMVFINSSNFPKTAA) are cleaved as a signal peptide. 4 N-linked (GlcNAc...) asparagine glycosylation sites follow: asparagine 16, asparagine 33, asparagine 43, and asparagine 83. A disulfide bridge links cysteine 42 with cysteine 51. Cysteine 109 and cysteine 158 form a disulfide bridge.

Belongs to the PMEI family. Binds reversibly to PME3 to inhibit its activity; the stability of the PME3-PMEI4 complex and the inhibition of the pectin methylesterase (PME) activity is pH-dependent, based on protonation status of amino-acids at the complex interface. Expressed in outer cell layer of roots, particularly in the root-hair zone. Expressed in roots and siliques.

It localises to the secreted. The protein localises to the extracellular space. Its subcellular location is the apoplast. Functionally, pectin methylesterase (PME) inhibitor that can target the root-expressed PME17 and PME3 in a pH-dependent manner, mainly in slightly acidic conditions (pH 6.3 and 5.0) but not at pH 7.5; this processus relies on changes in the protonation of amino acids involved in intermolecular and intramolecular interactions. Regulate de-methylesterification of pectins in roots and affects root growth. The sequence is that of Pectinesterase inhibitor 4 from Arabidopsis thaliana (Mouse-ear cress).